The chain runs to 1143 residues: ATP-dependent helicase/deoxyribonuclease subunit B (1143 aa).

A UvrD-like helicase ATP-binding domain is found at 1–274; sequence MNYMHLGRAG…YGQTVKFQST (274 aa). Residue 7-14 participates in ATP binding; it reads GRAGTGKT. One can recognise a UvrD-like helicase C-terminal domain in the interval 267–565; the sequence is QTVKFQSTGL…RFSLVPPSLD (299 aa). The [4Fe-4S] cluster site is built by cysteine 782, cysteine 1104, cysteine 1107, and cysteine 1113.

Belongs to the helicase family. AddB/RexB type 1 subfamily. In terms of assembly, heterodimer of AddA and AddB. Mg(2+) is required as a cofactor. The cofactor is [4Fe-4S] cluster.

The heterodimer acts as both an ATP-dependent DNA helicase and an ATP-dependent, dual-direction single-stranded exonuclease. Recognizes the chi site generating a DNA molecule suitable for the initiation of homologous recombination. The AddB subunit has 5' -&gt; 3' nuclease activity but not helicase activity. In Exiguobacterium sibiricum (strain DSM 17290 / CCUG 55495 / CIP 109462 / JCM 13490 / 255-15), this protein is ATP-dependent helicase/deoxyribonuclease subunit B.